Consider the following 119-residue polypeptide: Large ribosomal subunit protein uL24 (119 aa).

The protein belongs to the universal ribosomal protein uL24 family. Part of the 50S ribosomal subunit.

In terms of biological role, one of two assembly initiator proteins, it binds directly to the 5'-end of the 23S rRNA, where it nucleates assembly of the 50S subunit. Functionally, one of the proteins that surrounds the polypeptide exit tunnel on the outside of the subunit. This is Large ribosomal subunit protein uL24 from Clavibacter michiganensis subsp. michiganensis (strain NCPPB 382).